The primary structure comprises 248 residues: Ureidoacrylate amidohydrolase RutB (248 aa).

Catalysis depends on aspartate 41, which acts as the Proton acceptor. Residue lysine 150 is part of the active site. Catalysis depends on cysteine 183, which acts as the Nucleophile.

Belongs to the isochorismatase family. RutB subfamily.

It catalyses the reaction (Z)-3-ureidoacrylate + H2O + H(+) = (Z)-3-aminoacrylate + NH4(+) + CO2. The catalysed reaction is (Z)-3-ureidoacrylate + H2O = (Z)-3-aminoacrylate + carbamate + H(+). The enzyme catalyses (Z)-2-methylureidoacrylate + H2O + H(+) = (Z)-2-methylaminoacrylate + NH4(+) + CO2. Its function is as follows. Hydrolyzes ureidoacrylate to form aminoacrylate and carbamate. The carbamate hydrolyzes spontaneously, thereby releasing one of the nitrogen atoms of the pyrimidine ring as ammonia and one of its carbon atoms as CO2. In Stutzerimonas stutzeri (strain A1501) (Pseudomonas stutzeri), this protein is Ureidoacrylate amidohydrolase RutB.